The sequence spans 566 residues: Protein downstream neighbor of Son (566 aa).

Positions 1 to 110 (MALSVPGYSP…QPEAPVPFLD (110 aa)) are disordered. Phosphoserine is present on residues S28 and S34. Gly residues predominate over residues 62–72 (GGRGGGSGGGP). Over residues 73–82 (AAARRNPFAR) the composition is skewed to low complexity.

The protein belongs to the DONSON family. Component of the replisome complex composed of at least DONSON, MCM2, MCM7, PCNA and TICRR; interaction at least with PCNA occurs during DNA replication. Expressed in the brain, with higher levels in prenatal compared to adult brain.

It is found in the nucleus. Replisome component that maintains genome stability by protecting stalled or damaged replication forks. After the induction of replication stress, required for the stabilization of stalled replication forks, the efficient activation of the intra-S-phase and G/2M cell-cycle checkpoints and the maintenance of genome stability. The sequence is that of Protein downstream neighbor of Son (DONSON) from Homo sapiens (Human).